The primary structure comprises 200 residues: Imidazole glycerol phosphate synthase subunit HisH (200 aa).

The Glutamine amidotransferase type-1 domain occupies K2–R200. The active-site Nucleophile is the C79. Residues H179 and E181 contribute to the active site.

As to quaternary structure, heterodimer of HisH and HisF.

Its subcellular location is the cytoplasm. It catalyses the reaction 5-[(5-phospho-1-deoxy-D-ribulos-1-ylimino)methylamino]-1-(5-phospho-beta-D-ribosyl)imidazole-4-carboxamide + L-glutamine = D-erythro-1-(imidazol-4-yl)glycerol 3-phosphate + 5-amino-1-(5-phospho-beta-D-ribosyl)imidazole-4-carboxamide + L-glutamate + H(+). The enzyme catalyses L-glutamine + H2O = L-glutamate + NH4(+). The protein operates within amino-acid biosynthesis; L-histidine biosynthesis; L-histidine from 5-phospho-alpha-D-ribose 1-diphosphate: step 5/9. In terms of biological role, IGPS catalyzes the conversion of PRFAR and glutamine to IGP, AICAR and glutamate. The HisH subunit catalyzes the hydrolysis of glutamine to glutamate and ammonia as part of the synthesis of IGP and AICAR. The resulting ammonia molecule is channeled to the active site of HisF. This chain is Imidazole glycerol phosphate synthase subunit HisH, found in Methanopyrus kandleri (strain AV19 / DSM 6324 / JCM 9639 / NBRC 100938).